Reading from the N-terminus, the 117-residue chain is Large ribosomal subunit protein bL20 (117 aa).

This sequence belongs to the bacterial ribosomal protein bL20 family.

Its function is as follows. Binds directly to 23S ribosomal RNA and is necessary for the in vitro assembly process of the 50S ribosomal subunit. It is not involved in the protein synthesizing functions of that subunit. The chain is Large ribosomal subunit protein bL20 from Trichlorobacter lovleyi (strain ATCC BAA-1151 / DSM 17278 / SZ) (Geobacter lovleyi).